We begin with the raw amino-acid sequence, 269 residues long: Dihydropteroate synthase (269 aa).

Positions 14-261 (TYIMGILNFT…DVLENSRAAK (248 aa)) constitute a Pterin-binding domain. Position 21 (Asn-21) interacts with Mg(2+). Residues Thr-61, Asp-95, Asn-114, Asp-178, Lys-214, and 249–251 (RVH) contribute to the (7,8-dihydropterin-6-yl)methyl diphosphate site.

Belongs to the DHPS family. It depends on Mg(2+) as a cofactor.

It carries out the reaction (7,8-dihydropterin-6-yl)methyl diphosphate + 4-aminobenzoate = 7,8-dihydropteroate + diphosphate. The protein operates within cofactor biosynthesis; tetrahydrofolate biosynthesis; 7,8-dihydrofolate from 2-amino-4-hydroxy-6-hydroxymethyl-7,8-dihydropteridine diphosphate and 4-aminobenzoate: step 1/2. In terms of biological role, catalyzes the condensation of para-aminobenzoate (pABA) with 6-hydroxymethyl-7,8-dihydropterin diphosphate (DHPt-PP) to form 7,8-dihydropteroate (H2Pte), the immediate precursor of folate derivatives. This Clostridium beijerinckii (strain ATCC 51743 / NCIMB 8052) (Clostridium acetobutylicum) protein is Dihydropteroate synthase.